We begin with the raw amino-acid sequence, 443 residues long: Tol-Pal system protein TolB (443 aa).

A signal peptide spans 1–18 (MRNIVYFILTLFSLTSYA).

It belongs to the TolB family. The Tol-Pal system is composed of five core proteins: the inner membrane proteins TolA, TolQ and TolR, the periplasmic protein TolB and the outer membrane protein Pal. They form a network linking the inner and outer membranes and the peptidoglycan layer.

It is found in the periplasm. In terms of biological role, part of the Tol-Pal system, which plays a role in outer membrane invagination during cell division and is important for maintaining outer membrane integrity. The sequence is that of Tol-Pal system protein TolB from Rickettsia prowazekii (strain Madrid E).